The primary structure comprises 296 residues: D-alanine--D-alanine ligase (296 aa).

The ATP-grasp domain occupies 103–293; the sequence is KEILMHHRMP…FDSFVKRIIE (191 aa). ATP is bound at residue 129 to 180; it reads ISFPVAVKPSSGGSSIATFKVKSIQELKHAYEEASKYGEVMIEQWVTGKEIT. 3 residues coordinate Mg(2+): aspartate 247, glutamate 260, and asparagine 262.

The protein belongs to the D-alanine--D-alanine ligase family. Mg(2+) serves as cofactor. Requires Mn(2+) as cofactor.

It is found in the cytoplasm. It catalyses the reaction 2 D-alanine + ATP = D-alanyl-D-alanine + ADP + phosphate + H(+). Its pathway is cell wall biogenesis; peptidoglycan biosynthesis. Its function is as follows. Cell wall formation. The chain is D-alanine--D-alanine ligase from Francisella tularensis subsp. novicida (strain U112).